Consider the following 257-residue polypeptide: Imidazole glycerol phosphate synthase subunit HisF (257 aa).

Residues D11 and D130 contribute to the active site.

It belongs to the HisA/HisF family. In terms of assembly, heterodimer of HisH and HisF.

Its subcellular location is the cytoplasm. The enzyme catalyses 5-[(5-phospho-1-deoxy-D-ribulos-1-ylimino)methylamino]-1-(5-phospho-beta-D-ribosyl)imidazole-4-carboxamide + L-glutamine = D-erythro-1-(imidazol-4-yl)glycerol 3-phosphate + 5-amino-1-(5-phospho-beta-D-ribosyl)imidazole-4-carboxamide + L-glutamate + H(+). It functions in the pathway amino-acid biosynthesis; L-histidine biosynthesis; L-histidine from 5-phospho-alpha-D-ribose 1-diphosphate: step 5/9. IGPS catalyzes the conversion of PRFAR and glutamine to IGP, AICAR and glutamate. The HisF subunit catalyzes the cyclization activity that produces IGP and AICAR from PRFAR using the ammonia provided by the HisH subunit. The sequence is that of Imidazole glycerol phosphate synthase subunit HisF from Vibrio campbellii (strain ATCC BAA-1116).